A 389-amino-acid chain; its full sequence is MGGMQVQITNLTEWLADQGVRQDVLTTGIPGIPRTLQLRDRLTVHSVRFMTLPFKSSQTGTVFLDQSWFMGAVKWIVLNGKKNNYDAIHVHASGVVWPLLAGMFAQKYLKKPLILTIHCSRIFTYKPMNKWDQFVHDFVKSVELKSIKLSHKAVVLTDKRLDSYNRLLEDSSKMTAISDCIGSNHLSHSIDCPFCSRLKTELLGKKTVLFLGRIAHEKGWSTFVSVAKELADKIGDLQFIVCGDGPQREAMEEQIKAANLQNQFRITGFISHKFVSCYLHHAQLFLLPSHHEEFGGSLIEAAIAGVPIISTNNGGPADIFTHGETAILKDPGDVSGIADEAYKILTNDSVAESLRLHSRPEVVSKFLPHCVYPNYLNLYSSKEAAVHEG.

This sequence belongs to the glycosyltransferase group 1 family.

The catalysed reaction is 2-deoxystreptamine + UDP-N-acetyl-alpha-D-glucosamine = 2'-N-acetylparomamine + UDP + H(+). It participates in antibiotic biosynthesis; butirosin biosynthesis. Glycosyltransferase involved in the biosynthesis of butirosin by mediating conversion of 2-deoxystreptamine (2-DOS) to 2'-N-acetylparomamine using UDP-alpha-D-glucosamine as sugar donor. The polypeptide is 2-deoxystreptamine N-acetyl-D-glucosaminyltransferase (btrM) (Niallia circulans (Bacillus circulans)).